The following is an 847-amino-acid chain: Putative disease resistance RPP13-like protein 2 (847 aa).

Residues Gly26 to Gln42 adopt a coiled-coil conformation. The NB-ARC domain maps to Ser142 to Glu446. Residue Gly191–Thr198 coordinates ATP. LRR repeat units lie at residues Leu587–Leu610, Phe612–Ser634, Leu703–Phe726, Phe749–Arg774, and Ile807–Asn830.

It belongs to the disease resistance NB-LRR family. RPP13 subfamily.

Its function is as follows. Potential disease resistance protein. This is Putative disease resistance RPP13-like protein 2 (RPP13L2) from Arabidopsis thaliana (Mouse-ear cress).